The following is a 107-amino-acid chain: uncharacterized protein (107 aa).

3 helical membrane-spanning segments follow: residues Thr15–Ser35, Leu43–Tyr63, and Tyr87–Phe107.

It localises to the membrane. This is an uncharacterized protein from Saccharomyces cerevisiae (strain ATCC 204508 / S288c) (Baker's yeast).